A 399-amino-acid polypeptide reads, in one-letter code: Glycosyltransferase BC10 (399 aa).

Residues 1-17 (MKPPRRWMYGRGGGKGK) lie on the Cytoplasmic side of the membrane. The helical; Signal-anchor for type II membrane protein transmembrane segment at 18-38 (PAGLLLLGVFLCLSVVLLLLL) threads the bilayer. Over 39–399 (HGSSPSLEGE…LIAANGASTM (361 aa)) the chain is Lumenal. Residues asparagine 142 and asparagine 188 are each glycosylated (N-linked (GlcNAc...) asparagine).

This sequence belongs to the glycosyltransferase 14 family. As to expression, expressed in roots, culms, leaves and panicles. Expressed in vascular bundles of leaf sheaths and stems where sclerenchyma cells are developing. Expressed in mechanical tissues of young organs, such as young leaf sheaths, stems and tiller buds.

The protein resides in the membrane. Its function is as follows. Glycosyltransferase required for the regulation of cellulose biosynthesis in the cell wall. Required for the biosynthesis of hexoses (glucose, mannose and galactose) in both cellulosic and non-cellulosic (pectins and hemicelluloses) components of cell walls. Required for the formation of arabinogalactan proteins which contribute to the strengthening of cell walls. Possesses low glycosyltransferase activity. The polypeptide is Glycosyltransferase BC10 (Oryza sativa subsp. japonica (Rice)).